The chain runs to 360 residues: Phospho-N-acetylmuramoyl-pentapeptide-transferase (360 aa).

Helical transmembrane passes span 24–44, 69–89, 92–112, 133–153, 158–178, 199–219, 239–259, 263–283, 288–308, and 337–357; these read RAVM…PWTI, GTPT…TLLW, WANP…ALGF, MVWQ…LAAN, ILIV…GFLV, GLAT…AYAS, VVIF…FNAY, VFMG…VAVI, FVLV…MLQV, and QVVV…LSTL.

The protein belongs to the glycosyltransferase 4 family. MraY subfamily. Mg(2+) is required as a cofactor.

The protein localises to the cell inner membrane. The enzyme catalyses UDP-N-acetyl-alpha-D-muramoyl-L-alanyl-gamma-D-glutamyl-meso-2,6-diaminopimeloyl-D-alanyl-D-alanine + di-trans,octa-cis-undecaprenyl phosphate = di-trans,octa-cis-undecaprenyl diphospho-N-acetyl-alpha-D-muramoyl-L-alanyl-D-glutamyl-meso-2,6-diaminopimeloyl-D-alanyl-D-alanine + UMP. Its pathway is cell wall biogenesis; peptidoglycan biosynthesis. In terms of biological role, catalyzes the initial step of the lipid cycle reactions in the biosynthesis of the cell wall peptidoglycan: transfers peptidoglycan precursor phospho-MurNAc-pentapeptide from UDP-MurNAc-pentapeptide onto the lipid carrier undecaprenyl phosphate, yielding undecaprenyl-pyrophosphoryl-MurNAc-pentapeptide, known as lipid I. The protein is Phospho-N-acetylmuramoyl-pentapeptide-transferase of Neisseria meningitidis serogroup A / serotype 4A (strain DSM 15465 / Z2491).